Here is a 318-residue protein sequence, read N- to C-terminus: Transaldolase (318 aa).

Catalysis depends on Lys-132, which acts as the Schiff-base intermediate with substrate.

It belongs to the transaldolase family. Type 1 subfamily. As to quaternary structure, homodimer.

The protein localises to the cytoplasm. The catalysed reaction is D-sedoheptulose 7-phosphate + D-glyceraldehyde 3-phosphate = D-erythrose 4-phosphate + beta-D-fructose 6-phosphate. It participates in carbohydrate degradation; pentose phosphate pathway; D-glyceraldehyde 3-phosphate and beta-D-fructose 6-phosphate from D-ribose 5-phosphate and D-xylulose 5-phosphate (non-oxidative stage): step 2/3. Its function is as follows. Transaldolase is important for the balance of metabolites in the pentose-phosphate pathway. The polypeptide is Transaldolase (Shewanella baltica (strain OS155 / ATCC BAA-1091)).